Reading from the N-terminus, the 163-residue chain is NADH-quinone oxidoreductase subunit I (163 aa).

2 consecutive 4Fe-4S ferredoxin-type domains span residues 53–83 (LRRY…IEAG) and 94–123 (VRYD…EGPN). [4Fe-4S] cluster-binding residues include cysteine 63, cysteine 66, cysteine 69, cysteine 73, cysteine 103, cysteine 106, cysteine 109, and cysteine 113.

It belongs to the complex I 23 kDa subunit family. NDH-1 is composed of 14 different subunits. Subunits NuoA, H, J, K, L, M, N constitute the membrane sector of the complex. Requires [4Fe-4S] cluster as cofactor.

It localises to the cell inner membrane. It carries out the reaction a quinone + NADH + 5 H(+)(in) = a quinol + NAD(+) + 4 H(+)(out). NDH-1 shuttles electrons from NADH, via FMN and iron-sulfur (Fe-S) centers, to quinones in the respiratory chain. The immediate electron acceptor for the enzyme in this species is believed to be ubiquinone. Couples the redox reaction to proton translocation (for every two electrons transferred, four hydrogen ions are translocated across the cytoplasmic membrane), and thus conserves the redox energy in a proton gradient. This is NADH-quinone oxidoreductase subunit I from Brucella melitensis biotype 1 (strain ATCC 23456 / CCUG 17765 / NCTC 10094 / 16M).